The primary structure comprises 122 residues: Large ribosomal subunit protein uL14 (122 aa).

Belongs to the universal ribosomal protein uL14 family. Part of the 50S ribosomal subunit. Forms a cluster with proteins L3 and L19. In the 70S ribosome, L14 and L19 interact and together make contacts with the 16S rRNA in bridges B5 and B8.

Binds to 23S rRNA. Forms part of two intersubunit bridges in the 70S ribosome. This Geobacillus kaustophilus (strain HTA426) protein is Large ribosomal subunit protein uL14.